Consider the following 408-residue polypeptide: Argininosuccinate synthase (408 aa).

14 to 22 (AYSGGLDTS) contacts ATP. L-citrulline contacts are provided by Tyr92 and Ser97. An ATP-binding site is contributed by Gly122. Residues Thr124, Asn128, and Asp129 each coordinate L-aspartate. Asn128 contributes to the L-citrulline binding site. The L-citrulline site is built by Arg132, Ser181, Ser190, Glu266, and Tyr278.

This sequence belongs to the argininosuccinate synthase family. Type 1 subfamily. Homotetramer.

The protein localises to the cytoplasm. It carries out the reaction L-citrulline + L-aspartate + ATP = 2-(N(omega)-L-arginino)succinate + AMP + diphosphate + H(+). It functions in the pathway amino-acid biosynthesis; L-arginine biosynthesis; L-arginine from L-ornithine and carbamoyl phosphate: step 2/3. This is Argininosuccinate synthase from Moorella thermoacetica (strain ATCC 39073 / JCM 9320).